Reading from the N-terminus, the 76-residue chain is Large ribosomal subunit protein uL29 (76 aa).

It belongs to the universal ribosomal protein uL29 family.

This chain is Large ribosomal subunit protein uL29, found in Corynebacterium diphtheriae (strain ATCC 700971 / NCTC 13129 / Biotype gravis).